The following is a 77-amino-acid chain: MSDIADRVKKIVVEHLGVDEEKVTETASFIDDLGADSLDTVELVMAFEEEFGIEIPDDAAETIQTFGDAVKFIQGAV.

A Carrier domain is found at 2 to 77; it reads SDIADRVKKI…DAVKFIQGAV (76 aa). An O-(pantetheine 4'-phosphoryl)serine modification is found at Ser37.

The protein belongs to the acyl carrier protein (ACP) family. 4'-phosphopantetheine is transferred from CoA to a specific serine of apo-ACP by AcpS. This modification is essential for activity because fatty acids are bound in thioester linkage to the sulfhydryl of the prosthetic group.

It localises to the cytoplasm. It participates in lipid metabolism; fatty acid biosynthesis. Functionally, carrier of the growing fatty acid chain in fatty acid biosynthesis. This chain is Acyl carrier protein, found in Paracoccus denitrificans (strain Pd 1222).